Here is a 78-residue protein sequence, read N- to C-terminus: Beta-defensin 105 (78 aa).

An N-terminal signal peptide occupies residues 1–27 (MALIRKTFYFLFAMFFILVQLPSGCQA). 3 disulfide bridges follow: Cys-43-Cys-74, Cys-53-Cys-67, and Cys-57-Cys-73.

This sequence belongs to the beta-defensin family. In terms of tissue distribution, specifically expressed in testis.

It localises to the secreted. Its function is as follows. Has antibacterial activity. This is Beta-defensin 105 (DEFB105A) from Homo sapiens (Human).